The primary structure comprises 77 residues: U8-lycotoxin-Ls1m (77 aa).

An N-terminal signal peptide occupies residues 1-20; the sequence is MKLMIFTGLFLFAIVSLIEA. Positions 21-26 are excised as a propeptide; that stretch reads QAENEK.

Belongs to the neurotoxin 19 (CSTX) family. 08 (U8-Lctx) subfamily. Contains 4 disulfide bonds. Expressed by the venom gland.

The protein localises to the secreted. The polypeptide is U8-lycotoxin-Ls1m (Lycosa singoriensis (Wolf spider)).